Here is a 576-residue protein sequence, read N- to C-terminus: MEFRKEEFKKLAGNTLGHLHRILEKKQTNGETIELTEEGRPVIKEEKRQPVVDCTCFGLPRRYIIAIMSGLGFCISFGIRCNLGVAIVSMVNNNTVYKGNKIVIEQAQFTWDPETVGMIHGSFFWGYIVTQIPGGYICQKFAANRVFGFAIVATSTLNMLIPSAARVHFACVICVRILQGLVEGVTYPACHGIWSKWAPPLERSRLATTAFCGSYAGAVVAMPLAGVLVQYSGWSSVFYVYGSFGIMWYMFWILVSYESPAIHPTISEEEKKYIEESIGESTGLMNPMAKFKAPWRKFFTSMPVYAIIVANFCRSWTFYLLLISQPAYFEEVFGFEISKVGLLSALPHLVMTIIVPIGGQIADFLRTKRIMSTTNVRKMMNCGGFGMEATLLLVVGYSHSRGVAISFLVLAVGFSGFAISGFNVNHLDIAPRYASILMGISNGVGTLSGMVCPLIVGAMTKHKTREEWQYVFLIASLVHYGGVLFYGIFASGEKQPWAEPEETSDEKCGFIHEDELADESEEQSQAYGAYGSYGATQTTSQQNGGWTAEWEKKEEFIQDQGKDPYLYGTVAERDLS.

Residues 1 to 63 (MEFRKEEFKK…CTCFGLPRRY (63 aa)) are Cytoplasmic-facing. The helical transmembrane segment at 64 to 84 (IIAIMSGLGFCISFGIRCNLG) threads the bilayer. Residues 85 to 116 (VAIVSMVNNNTVYKGNKIVIEQAQFTWDPETV) are Vesicular-facing. Asn93 is a glycosylation site (N-linked (GlcNAc...) asparagine). Residues 117-137 (GMIHGSFFWGYIVTQIPGGYI) traverse the membrane as a helical segment. Topologically, residues 138–140 (CQK) are cytoplasmic. The chain crosses the membrane as a helical span at residues 141 to 161 (FAANRVFGFAIVATSTLNMLI). Residues 162-168 (PSAARVH) are Vesicular-facing. The chain crosses the membrane as a helical span at residues 169–189 (FACVICVRILQGLVEGVTYPA). Topologically, residues 190 to 208 (CHGIWSKWAPPLERSRLAT) are cytoplasmic. The chain crosses the membrane as a helical span at residues 209-229 (TAFCGSYAGAVVAMPLAGVLV). The Vesicular segment spans residues 230-236 (QYSGWSS). The helical transmembrane segment at 237–257 (VFYVYGSFGIMWYMFWILVSY) threads the bilayer. Residues 258-302 (ESPAIHPTISEEEKKYIEESIGESTGLMNPMAKFKAPWRKFFTSM) are Cytoplasmic-facing. Residues 303-323 (PVYAIIVANFCRSWTFYLLLI) traverse the membrane as a helical segment. At 324–341 (SQPAYFEEVFGFEISKVG) the chain is on the vesicular side. A helical transmembrane segment spans residues 342–362 (LLSALPHLVMTIIVPIGGQIA). At 363-378 (DFLRTKRIMSTTNVRK) the chain is on the cytoplasmic side. A helical membrane pass occupies residues 379-399 (MMNCGGFGMEATLLLVVGYSH). Residues 400 to 401 (SR) are Vesicular-facing. The helical transmembrane segment at 402-422 (GVAISFLVLAVGFSGFAISGF) threads the bilayer. Residues 423 to 435 (NVNHLDIAPRYAS) are Cytoplasmic-facing. A helical membrane pass occupies residues 436–456 (ILMGISNGVGTLSGMVCPLIV). The Vesicular segment spans residues 457 to 469 (GAMTKHKTREEWQ). Residues 470-490 (YVFLIASLVHYGGVLFYGIFA) form a helical membrane-spanning segment. At 491 to 576 (SGEKQPWAEP…YGTVAERDLS (86 aa)) the chain is on the cytoplasmic side. Residues 517-547 (ADESEEQSQAYGAYGSYGATQTTSQQNGGWT) are disordered. Polar residues predominate over residues 534–545 (GATQTTSQQNGG).

Belongs to the major facilitator superfamily. Sodium/anion cotransporter family. VGLUT subfamily.

The protein resides in the cytoplasmic vesicle. The protein localises to the secretory vesicle. It localises to the synaptic vesicle membrane. Its subcellular location is the cell membrane. It is found in the synapse. The protein resides in the synaptosome. It carries out the reaction L-glutamate(out) = L-glutamate(in). The catalysed reaction is chloride(in) = chloride(out). It catalyses the reaction 3 Na(+)(out) + phosphate(out) = 3 Na(+)(in) + phosphate(in). The enzyme catalyses phosphate(in) = phosphate(out). It carries out the reaction K(+)(in) + H(+)(out) = K(+)(out) + H(+)(in). Chloride channel activity is allosterically activated by lumenal H(+) and Cl(-) leading to synaptic vesicles acidification. The L-glutamate transport activity is allosterically activated by lumenal H(+) and Cl(-). The allosteric activation by H(+) efficiently prevents non-vesicular efflux across the plasma membrane, thereby restricting L-glutamate transport activity to acidic membranes such as synaptic vesicles. Multifunctional transporter that transports L-glutamate as well as multiple ions such as chloride, proton, potassium, sodium and phosphate. At the synaptic vesicle membrane, mainly functions as an uniporter which transports preferentially L-glutamate but also phosphate from the cytoplasm into synaptic vesicles at presynaptic nerve terminals of excitatory neural cells. The L-glutamate or phosphate uniporter activity is electrogenic and is driven by the proton electrochemical gradient, mainly by the electrical gradient established by the vacuolar H(+)-ATPase across the synaptic vesicle membrane. In addition, functions as a chloride channel that allows a chloride permeation through the synaptic vesicle membrane that affects the proton electrochemical gradient and promotes synaptic vesicles acidification. Moreover, may function as a K(+)/H(+) antiport allowing to maintain the electrical gradient and to decrease chemical gradient and therefore sustain vesicular glutamate uptake. The vesicular K(+)/H(+) antiport activity is electroneutral. At the plasma membrane, following exocytosis, functions as a symporter of Na(+) and phosphate from the extracellular space to the cytoplasm allowing synaptic phosphate homeostasis regulation. The symporter activity is driven by an inside negative membrane potential and is electrogenic. Is necessary for synaptic signaling of visual-evoked responses from photoreceptors. In Xenopus tropicalis (Western clawed frog), this protein is Vesicular glutamate transporter 1.